The sequence spans 282 residues: tRNA U34 carboxymethyltransferase (282 aa).

Residues lysine 54, tryptophan 68, lysine 73, glycine 92, 114-116 (DPS), tyrosine 161, and arginine 276 contribute to the carboxy-S-adenosyl-L-methionine site.

The protein belongs to the class I-like SAM-binding methyltransferase superfamily. CmoB family. As to quaternary structure, homotetramer.

The enzyme catalyses carboxy-S-adenosyl-L-methionine + 5-hydroxyuridine(34) in tRNA = 5-carboxymethoxyuridine(34) in tRNA + S-adenosyl-L-homocysteine + H(+). Functionally, catalyzes carboxymethyl transfer from carboxy-S-adenosyl-L-methionine (Cx-SAM) to 5-hydroxyuridine (ho5U) to form 5-carboxymethoxyuridine (cmo5U) at position 34 in tRNAs. This Campylobacter fetus subsp. fetus (strain 82-40) protein is tRNA U34 carboxymethyltransferase.